The sequence spans 498 residues: Glycylpeptide N-tetradecanoyltransferase 2 (498 aa).

The interval 1 to 88 is disordered; the sequence is MAEDSESAAS…QPSKNPSVPM (88 aa). Residues 15–32 are compositionally biased toward acidic residues; it reads ELDDQDTCGIDGDNEEET. Residue Ser-38 is modified to Phosphoserine. Over residues 45-57 the composition is skewed to basic residues; sequence AKKKKKKQKRKKE. Residues 61 to 86 show a composition bias toward polar residues; that stretch reads SGGTKSDSASDSQEIKIQQPSKNPSV. His-117, Trp-122, Leu-250, Val-252, Ser-258, Arg-260, Val-261, and Ala-262 together coordinate tetradecanoyl-CoA.

Belongs to the NMT family.

The protein localises to the cytoplasm. It localises to the membrane. The catalysed reaction is N-terminal glycyl-[protein] + tetradecanoyl-CoA = N-tetradecanoylglycyl-[protein] + CoA + H(+). The enzyme catalyses N-terminal glycyl-L-lysyl-[protein] + tetradecanoyl-CoA = N-terminal glycyl-(N(6)-tetradecanoyl)-L-lysyl-[protein] + CoA + H(+). Its function is as follows. Adds a myristoyl group to the N-terminal glycine residue of certain cellular and viral proteins. Also able to mediate N-terminal lysine myristoylation of proteins: catalyzes myristoylation of ARF6 on both 'Gly-2' and 'Lys-3'. Lysine myristoylation is required to maintain ARF6 on membranes during the GTPase cycle. This Homo sapiens (Human) protein is Glycylpeptide N-tetradecanoyltransferase 2.